The following is a 116-amino-acid chain: Protein cop (116 aa).

Putative control of replication message. The sequence is that of Protein cop (cop) from Staphylococcus aureus.